An 873-amino-acid polypeptide reads, in one-letter code: DNA mismatch repair protein MutS (873 aa).

Residue 625 to 632 (GPNMGGKS) participates in ATP binding.

Belongs to the DNA mismatch repair MutS family.

Functionally, this protein is involved in the repair of mismatches in DNA. It is possible that it carries out the mismatch recognition step. This protein has a weak ATPase activity. This chain is DNA mismatch repair protein MutS, found in Xanthomonas oryzae pv. oryzae (strain KACC10331 / KXO85).